An 896-amino-acid chain; its full sequence is Bifunctional glutamine synthetase adenylyltransferase/adenylyl-removing enzyme (896 aa).

Residues 1 to 411 are adenylyl removase; that stretch reads MSDNRLDTAR…LFNEILSEPE (411 aa). The segment at 417–896 is adenylyl transferase; that stretch reads NSEWQWAWQD…EVFGEEAATV (480 aa).

The protein belongs to the GlnE family. Mg(2+) serves as cofactor.

The enzyme catalyses [glutamine synthetase]-O(4)-(5'-adenylyl)-L-tyrosine + phosphate = [glutamine synthetase]-L-tyrosine + ADP. The catalysed reaction is [glutamine synthetase]-L-tyrosine + ATP = [glutamine synthetase]-O(4)-(5'-adenylyl)-L-tyrosine + diphosphate. Involved in the regulation of glutamine synthetase GlnA, a key enzyme in the process to assimilate ammonia. When cellular nitrogen levels are high, the C-terminal adenylyl transferase (AT) inactivates GlnA by covalent transfer of an adenylyl group from ATP to specific tyrosine residue of GlnA, thus reducing its activity. Conversely, when nitrogen levels are low, the N-terminal adenylyl removase (AR) activates GlnA by removing the adenylyl group by phosphorolysis, increasing its activity. The regulatory region of GlnE binds the signal transduction protein PII (GlnB) which indicates the nitrogen status of the cell. The protein is Bifunctional glutamine synthetase adenylyltransferase/adenylyl-removing enzyme of Neisseria meningitidis serogroup B (strain ATCC BAA-335 / MC58).